The chain runs to 161 residues: Allophycocyanin beta chain (161 aa).

Residue Asn-71 is modified to N4-methylasparagine. Residue Cys-81 coordinates (2R,3E)-phycocyanobilin.

This sequence belongs to the phycobiliprotein family. Heterodimer of an alpha and a beta chain. In terms of processing, contains one covalently linked phycocyanobilin chromophore.

The protein localises to the cellular thylakoid membrane. Light-harvesting photosynthetic bile pigment-protein from the phycobiliprotein complex. Allophycocyanin has a maximum absorption at approximately 650 nanometers. The polypeptide is Allophycocyanin beta chain (apcB) (Arthrospira platensis (Spirulina platensis)).